We begin with the raw amino-acid sequence, 139 residues long: MNSDYYDYDALLKRAVSQLPEEVFKDVRFEVPHADSFVEGNRTMVKNFVDISKVIRREPQFFAKYVLKELGTAGDVEGPRLILQGKFGNYIINSKIKKFVDEYVLCPECGKPDTKIIKEGRIHFLKCMACGAMKPIKLI.

It belongs to the eIF-2-beta/eIF-5 family. In terms of assembly, heterotrimer composed of an alpha, a beta and a gamma chain.

In terms of biological role, eIF-2 functions in the early steps of protein synthesis by forming a ternary complex with GTP and initiator tRNA. This is Translation initiation factor 2 subunit beta from Methanococcus aeolicus (strain ATCC BAA-1280 / DSM 17508 / OCM 812 / Nankai-3).